The sequence spans 876 residues: Monofunctional isopimaradiene synthase, chloroplastic (876 aa).

The transit peptide at 1–64 directs the protein to the chloroplast; it reads MAMPSYSSLS…YLRLGSRKII (64 aa). Mg(2+)-binding residues include aspartate 628, aspartate 632, asparagine 772, threonine 776, and glutamate 780. Positions 628 to 632 match the DDXXD motif motif; sequence DDLYD.

This sequence belongs to the terpene synthase family. Tpsd subfamily. Mg(2+) serves as cofactor.

The protein localises to the plastid. It is found in the chloroplast. The enzyme catalyses (+)-copalyl diphosphate = isopimara-7,15-diene + diphosphate. The protein operates within terpene metabolism; oleoresin biosynthesis. In terms of biological role, involved in defensive oleoresin formation in conifers in response to insect attack or other injury. Involved in diterpene (C20) olefins biosynthesis. Monofunctional enzyme lacking the DXDD motif in the class II active site relevant for the cyclization of geranylgeranyl diphosphate (GGPP). Requires (+)-copalyl diphosphate ((+)-CPP) as substrate, but no activity with GGPP or ent-CPP. Isopimaradiene is the major products of the enzyme followed by sandaracopimaradiene. This chain is Monofunctional isopimaradiene synthase, chloroplastic, found in Pinus banksiana (Jack pine).